Reading from the N-terminus, the 475-residue chain is Ribulose bisphosphate carboxylase large chain (475 aa).

A propeptide spanning residues 1 to 2 (MS) is cleaved from the precursor. Residue Pro3 is modified to N-acetylproline. At Lys14 the chain carries N6,N6,N6-trimethyllysine. Substrate is bound by residues Asn123 and Thr173. Lys175 (proton acceptor) is an active-site residue. Lys177 is a substrate binding site. Residues Lys201, Asp203, and Glu204 each contribute to the Mg(2+) site. Lys201 is modified (N6-carboxylysine). The Proton acceptor role is filled by His294. Residues Arg295, His327, and Ser379 each contribute to the substrate site.

The protein belongs to the RuBisCO large chain family. Type I subfamily. Heterohexadecamer of 8 large chains and 8 small chains; disulfide-linked. The disulfide link is formed within the large subunit homodimers. Requires Mg(2+) as cofactor. In terms of processing, the disulfide bond which can form in the large chain dimeric partners within the hexadecamer appears to be associated with oxidative stress and protein turnover.

The protein resides in the plastid. Its subcellular location is the chloroplast. It catalyses the reaction 2 (2R)-3-phosphoglycerate + 2 H(+) = D-ribulose 1,5-bisphosphate + CO2 + H2O. It carries out the reaction D-ribulose 1,5-bisphosphate + O2 = 2-phosphoglycolate + (2R)-3-phosphoglycerate + 2 H(+). Its function is as follows. RuBisCO catalyzes two reactions: the carboxylation of D-ribulose 1,5-bisphosphate, the primary event in carbon dioxide fixation, as well as the oxidative fragmentation of the pentose substrate in the photorespiration process. Both reactions occur simultaneously and in competition at the same active site. The chain is Ribulose bisphosphate carboxylase large chain from Viscum album (European mistletoe).